The chain runs to 691 residues: DNA ligase (691 aa).

Residues 41 to 45 (DAEYD), 90 to 91 (SL), and Glu130 each bind NAD(+). Lys132 acts as the N6-AMP-lysine intermediate in catalysis. NAD(+) contacts are provided by Arg153, Glu190, Lys307, and Lys331. Cys425, Cys428, Cys443, and Cys449 together coordinate Zn(2+). The 82-residue stretch at 610-691 (APQGVLAGKT…MHTLLEGHAR (82 aa)) folds into the BRCT domain.

It belongs to the NAD-dependent DNA ligase family. LigA subfamily. Mg(2+) serves as cofactor. The cofactor is Mn(2+).

It catalyses the reaction NAD(+) + (deoxyribonucleotide)n-3'-hydroxyl + 5'-phospho-(deoxyribonucleotide)m = (deoxyribonucleotide)n+m + AMP + beta-nicotinamide D-nucleotide.. Functionally, DNA ligase that catalyzes the formation of phosphodiester linkages between 5'-phosphoryl and 3'-hydroxyl groups in double-stranded DNA using NAD as a coenzyme and as the energy source for the reaction. It is essential for DNA replication and repair of damaged DNA. This chain is DNA ligase, found in Burkholderia pseudomallei (strain K96243).